Consider the following 238-residue polypeptide: 1-(5-phosphoribosyl)-5-[(5-phosphoribosylamino)methylideneamino] imidazole-4-carboxamide isomerase (238 aa).

D8 (proton acceptor) is an active-site residue. Residue D129 is the Proton donor of the active site.

It belongs to the HisA/HisF family.

It is found in the cytoplasm. It catalyses the reaction 1-(5-phospho-beta-D-ribosyl)-5-[(5-phospho-beta-D-ribosylamino)methylideneamino]imidazole-4-carboxamide = 5-[(5-phospho-1-deoxy-D-ribulos-1-ylimino)methylamino]-1-(5-phospho-beta-D-ribosyl)imidazole-4-carboxamide. It functions in the pathway amino-acid biosynthesis; L-histidine biosynthesis; L-histidine from 5-phospho-alpha-D-ribose 1-diphosphate: step 4/9. The polypeptide is 1-(5-phosphoribosyl)-5-[(5-phosphoribosylamino)methylideneamino] imidazole-4-carboxamide isomerase (Myxococcus xanthus (strain DK1622)).